We begin with the raw amino-acid sequence, 232 residues long: Large ribosomal subunit protein uL1 (232 aa).

It belongs to the universal ribosomal protein uL1 family. As to quaternary structure, part of the 50S ribosomal subunit.

Functionally, binds directly to 23S rRNA. The L1 stalk is quite mobile in the ribosome, and is involved in E site tRNA release. In terms of biological role, protein L1 is also a translational repressor protein, it controls the translation of the L11 operon by binding to its mRNA. The chain is Large ribosomal subunit protein uL1 from Alkaliphilus metalliredigens (strain QYMF).